Consider the following 959-residue polypeptide: Glycine dehydrogenase (decarboxylating) (959 aa).

Lys-708 is subject to N6-(pyridoxal phosphate)lysine.

This sequence belongs to the GcvP family. In terms of assembly, the glycine cleavage system is composed of four proteins: P, T, L and H. Pyridoxal 5'-phosphate is required as a cofactor.

The enzyme catalyses N(6)-[(R)-lipoyl]-L-lysyl-[glycine-cleavage complex H protein] + glycine + H(+) = N(6)-[(R)-S(8)-aminomethyldihydrolipoyl]-L-lysyl-[glycine-cleavage complex H protein] + CO2. In terms of biological role, the glycine cleavage system catalyzes the degradation of glycine. The P protein binds the alpha-amino group of glycine through its pyridoxal phosphate cofactor; CO(2) is released and the remaining methylamine moiety is then transferred to the lipoamide cofactor of the H protein. In Yersinia enterocolitica serotype O:8 / biotype 1B (strain NCTC 13174 / 8081), this protein is Glycine dehydrogenase (decarboxylating).